The primary structure comprises 351 residues: D-alanine--D-alanine ligase (351 aa).

The ATP-grasp domain occupies 135-343 (NQIFLQSGQK…MEEVFSDLIE (209 aa)). 167–222 (LETLGFPQFLKPVEGGSSVSVYKITNREQLKEKLALIFESDSKVMSQSFLTGIEVS) provides a ligand contact to ATP. D298, E310, and N312 together coordinate Mg(2+).

This sequence belongs to the D-alanine--D-alanine ligase family. Requires Mg(2+) as cofactor. Mn(2+) serves as cofactor.

It localises to the cytoplasm. The enzyme catalyses 2 D-alanine + ATP = D-alanyl-D-alanine + ADP + phosphate + H(+). The protein operates within cell wall biogenesis; peptidoglycan biosynthesis. Its function is as follows. Cell wall formation. This chain is D-alanine--D-alanine ligase, found in Leptospira interrogans serogroup Icterohaemorrhagiae serovar copenhageni (strain Fiocruz L1-130).